We begin with the raw amino-acid sequence, 1188 residues long: DNA-directed RNA polymerase subunit beta (1188 aa).

Belongs to the RNA polymerase beta chain family. In terms of assembly, the RNAP catalytic core consists of 2 alpha, 1 beta, 1 beta' and 1 omega subunit. When a sigma factor is associated with the core the holoenzyme is formed, which can initiate transcription.

It carries out the reaction RNA(n) + a ribonucleoside 5'-triphosphate = RNA(n+1) + diphosphate. Functionally, DNA-dependent RNA polymerase catalyzes the transcription of DNA into RNA using the four ribonucleoside triphosphates as substrates. The sequence is that of DNA-directed RNA polymerase subunit beta from Streptococcus pyogenes serotype M18 (strain MGAS8232).